Reading from the N-terminus, the 234-residue chain is Small ribosomal subunit protein uS3 (234 aa).

The KH type-2 domain maps to 39-107; the sequence is IRKFLKKELY…EVSINIKEVK (69 aa).

It belongs to the universal ribosomal protein uS3 family. Part of the 30S ribosomal subunit. Forms a tight complex with proteins S10 and S14.

Functionally, binds the lower part of the 30S subunit head. Binds mRNA in the 70S ribosome, positioning it for translation. The protein is Small ribosomal subunit protein uS3 of Helicobacter pylori (strain J99 / ATCC 700824) (Campylobacter pylori J99).